We begin with the raw amino-acid sequence, 103 residues long: MTHDHNHDHEHEERELITLVDEQGNETLFEILLTIDGKEEFGKNYVLLIPANAEEDENGEVEIQAYSFTENEDGTEGDLQPIPEDSDAEWDMIEEVFNSFMEE.

It belongs to the UPF0473 family.

In Streptococcus sanguinis (strain SK36), this protein is UPF0473 protein SSA_2239.